A 611-amino-acid polypeptide reads, in one-letter code: Immunoglobulin superfamily member 8 (611 aa).

The N-terminal stretch at 1-25 (MGVPSPTPLSSLLLLLLILGTRCYA) is a signal peptide. Ig-like C2-type domains are found at residues 26–143 (RQVH…AKVE), 160–284 (PRGR…WVQV), 301–422 (SQLA…EAAS), and 429–554 (PVHV…ADYS). Residues 26-577 (RQVHVPRGPL…VYPYTHAVDT (552 aa)) lie on the Extracellular side of the membrane. Cysteine 47 and cysteine 125 are disulfide-bonded. N-linked (GlcNAc...) asparagine glycosylation is found at asparagine 48 and asparagine 137. Cysteine 184 and cysteine 268 are oxidised to a cystine. Positions 272–274 (EWI) match the EWI motif motif. Intrachain disulfides connect cysteine 324–cysteine 404 and cysteine 460–cysteine 542. N-linked (GlcNAc...) asparagine glycosylation occurs at asparagine 325. Serine 516 is modified (phosphoserine). The helical transmembrane segment at 578–598 (LFVPLLVGTGVALVTGASVLA) threads the bilayer. At 599–611 (TITCCFMKRMRKR) the chain is on the cytoplasmic side. 2 S-palmitoyl cysteine lipidation sites follow: cysteine 602 and cysteine 603.

Interacts directly with CD82 and CD9/tetraspanin-29. Also interacts with integrin alpha-3/beta-1 and integrin alpha-4/beta-1. Part of a complex composed of CD9, PTGFRN and CD81. Interacts with CD81/tetraspanin-28. Expressed in lymphocytes as well as in many tissues with higher expression in brain. Detected in all regions of the brain with weak expression in the pituitary. Expressed selectively by neurons but not by glial cells. Expressed in myoblasts (at protein level).

It localises to the cell membrane. Member of the immunoglobulin superfamily (IgSF) that links tetraspanin-enriched microdomains to the actin cytoskeleton and plays several important roles in innate and adaptive immunity. Acts as an inducible receptor of HSPA8 on dendritic cells to enhance the CCL21/SLC-dependent migration of activated mature dendritic cells while attenuating their antigen-specific stimulatory capacities. In complex with alpha-actinins ACTN1 and ACTN4, regulates actin dynamics in the immune synapse and subsequent T-cell activation. Inhibits the entry of several viruses such as hepatitis C Virus (HCV) or HIV-1. Mechanistically, promotes a change in CD81 organization at the plasma membrane by significantly restricting its diffusion which in turn influences CD81 interaction with Claudin-1/CLDN1, preventing CLDN1 from acting as a co-receptor required for HCV entry. Accumulates at the presynaptic terminal, the producer cell side of the virological synapse, to prevent HIV-1 Env-mediated cell-cell fusion. Highly expressed on malignant cells with antigen presentation defects, interacts with NK receptor KLRA9 to suppress NK-cell cytotoxicity. May participate in the regulation of neurite outgrowth and maintenance of the neural network in the adult brain. The polypeptide is Immunoglobulin superfamily member 8 (Igsf8) (Mus musculus (Mouse)).